Reading from the N-terminus, the 1658-residue chain is Protein TIC 214 (1658 aa).

6 consecutive transmembrane segments (helical) span residues 28–48, 52–72, 82–102, 130–150, 165–185, and 199–219; these read FGLY…ILTI, LLGG…GQLI, IYVM…YMLF, IFLD…SPVF, ISFV…FINL, and VNYP…ILAL.

This sequence belongs to the TIC214 family. Part of the Tic complex.

It localises to the plastid. It is found in the chloroplast inner membrane. Functionally, involved in protein precursor import into chloroplasts. May be part of an intermediate translocation complex acting as a protein-conducting channel at the inner envelope. The protein is Protein TIC 214 of Huperzia lucidula (Shining clubmoss).